We begin with the raw amino-acid sequence, 431 residues long: Acrosin (431 aa).

Positions 1–16 (MLPTAVLLVLVVSVVA) are cleaved as a signal peptide. N-linked (GlcNAc...) asparagine glycosylation occurs at Asn-19. 6 cysteine pairs are disulfide-bonded: Cys-22/Cys-152, Cys-26/Cys-160, Cys-71/Cys-87, Cys-175/Cys-244, Cys-207/Cys-223, and Cys-234/Cys-264. One can recognise a Peptidase S1 domain in the interval 40 to 288 (VVGGQAAQQG…FLDWIASRIG (249 aa)). Residues His-86 and Asp-140 each act as charge relay system in the active site. The N-linked (GlcNAc...) asparagine glycan is linked to Asn-208. Ser-238 (charge relay system) is an active-site residue. Residues 295–385 (IQPATPTPPT…PPPASTKPPQ (91 aa)) form a disordered region. Residues 331-341 (PHPHPHPHPHP) show a composition bias toward basic residues. Over residues 342–381 (RPPQPPAAQAPPPPPPPPPPPPPPPPPPPPPPPPPPPAST) the composition is skewed to pro residues. A propeptide spans 351–431 (APPPPPPPPP…TEIPEVTLAS (81 aa)) (pro-rich).

Belongs to the peptidase S1 family. As to quaternary structure, heavy chain (catalytic) and a light chain linked by two disulfide bonds. Forms a heterodimer with SERPINA5.

The enzyme catalyses Preferential cleavage: Arg-|-Xaa, Lys-|-Xaa.. Inhibited by SERPINA5. Its function is as follows. Acrosin is the major protease of mammalian spermatozoa. It is a serine protease of trypsin-like cleavage specificity, it is synthesized in a zymogen form, proacrosin and stored in the acrosome. In Oryctolagus cuniculus (Rabbit), this protein is Acrosin (ACR).